Consider the following 689-residue polypeptide: MATSQRKILVTSALPYANGPIHLGHMLEYIQTDIWSRYQKLRGHECHYICADDAHGTPIMLKAQQLGIAPEDMIAQVNKEHQQDFADFNVAFDNYHSTHSEENRLMASDIYLKLRDNGYIKSKSISQLFDPEKSMFLPDRFVKGTCPKCKSPDQYGDNCDSCGATYSPTELINPKSAVSGATPVMKDTEHFFFDLPAFEGMLKEWTRSGALQVEMANKLDEWFEQGLQQWDITRDAPYFGFEIPDAPGKYFYVWLDAPIGYMGSFKNLCAKRPELSFDEFWGKDSTAEVYHFIGKDIVYFHSLFWPAMLHGSGYRQPNSVYAHGYVTVNGAKMSKSKGTFIKARTYLDHLDPEYLRYYYAAKLSSRIDDLDLNLEDFAQRVNSDLVGKLVNLASRTAGFITKRFDGKLAKINDTTLTEAFLAKQDVIADFYESREYGKAMREIMALADIANGFVADAAPWQMVKHDDQQEAAHQVCSNALNLFRILVTYLKPVLPRLAQDVEAFFQLPLTWDALGQDLAGHEIAPFKAMMQRVELDKVNAMVADSKDNLQVTADAPKTAAPEKIAKASSVSSEPLVSDPISETINFDDFAKIDLRIARIVKAEHVADADKLLKLQLDIGGETRQVFAGIKSAYSPEDLEGKLTVMVANLAPRKMRFGMSEGMVLAAGPGGSDLWILEPHEGAQPGMRVK.

A 'HIGH' region motif is present at residues 15-25 (PYANGPIHLGH). The Zn(2+) site is built by Cys146, Cys149, Cys159, and Cys162. Residues 332–336 (KMSKS) carry the 'KMSKS' region motif. Lys335 is an ATP binding site. The tRNA-binding domain maps to 588-689 (DFAKIDLRIA…EGAQPGMRVK (102 aa)).

The protein belongs to the class-I aminoacyl-tRNA synthetase family. MetG type 1 subfamily. Homodimer. Zn(2+) serves as cofactor.

The protein localises to the cytoplasm. It carries out the reaction tRNA(Met) + L-methionine + ATP = L-methionyl-tRNA(Met) + AMP + diphosphate. Functionally, is required not only for elongation of protein synthesis but also for the initiation of all mRNA translation through initiator tRNA(fMet) aminoacylation. In Shewanella baltica (strain OS155 / ATCC BAA-1091), this protein is Methionine--tRNA ligase.